Here is a 446-residue protein sequence, read N- to C-terminus: MREIVHVQGGQCGNQIGAKFWEVISDEHGVDPTGTYHGDSDLQLERINVYYNEATGGRYVPRAVLMDLEPGTMDSVRAGPFGQLFRPDNFVFGQTGAGNNWAKGHYTEGAELIDSVLDVVRKEAEGCDCLQGFQITHSLGGGTGSGMGTLLISKIREEYPDRIMETFSVFPSPKVSDTVVEPYNATLSVHQLVENADEVMVIDNEALYDICFRTLKLTTPTYGDLNHLVSACISGVTSCLRFPGQLNSDLRKLAVNLIPFPRLHFFMVGFAPLTSRGSQQYRALTVPELTQQMFDAKNMMCASDPRHGRYLTASAMFRGRMSTKEVDEQMLNVQNKNSSYFVEWIPNNIKSSVCDIPPKGLKLASTFIGNSTAIQEMFKRVAEQFTAMFRRKAFLHWYTGEGMDEMEFTEAESNMNDLVSEYQQYQDATAEEEGEYVEDEDEMDGM.

Residues glutamine 11, glutamate 69, serine 138, glycine 142, threonine 143, glycine 144, asparagine 204, and asparagine 226 each coordinate GTP. Position 69 (glutamate 69) interacts with Mg(2+). The tract at residues 426–446 is disordered; sequence QDATAEEEGEYVEDEDEMDGM. Acidic residues predominate over residues 429–446; it reads TAEEEGEYVEDEDEMDGM.

It belongs to the tubulin family. As to quaternary structure, dimer of alpha and beta chains. A typical microtubule is a hollow water-filled tube with an outer diameter of 25 nm and an inner diameter of 15 nM. Alpha-beta heterodimers associate head-to-tail to form protofilaments running lengthwise along the microtubule wall with the beta-tubulin subunit facing the microtubule plus end conferring a structural polarity. Microtubules usually have 13 protofilaments but different protofilament numbers can be found in some organisms and specialized cells. The cofactor is Mg(2+).

It localises to the cytoplasm. Its subcellular location is the cytoskeleton. Functionally, tubulin is the major constituent of microtubules, a cylinder consisting of laterally associated linear protofilaments composed of alpha- and beta-tubulin heterodimers. Microtubules grow by the addition of GTP-tubulin dimers to the microtubule end, where a stabilizing cap forms. Below the cap, tubulin dimers are in GDP-bound state, owing to GTPase activity of alpha-tubulin. This chain is Tubulin beta chain, found in Euplotes crassus.